Here is a 478-residue protein sequence, read N- to C-terminus: Lysosome membrane protein 2 (478 aa).

The Cytoplasmic portion of the chain corresponds to 2–4 (ARC). The chain crosses the membrane as a helical span at residues 5–27 (CFYTAGTLSLLLLVTSVTLLVAR). Topologically, residues 28–433 (VFQKAVDQTI…QLKSVINTTL (406 aa)) are lumenal. 4 N-linked (GlcNAc...) asparagine glycosylation sites follow: asparagine 45, asparagine 68, asparagine 105, and asparagine 122. The tract at residues 155–191 (IIEAMLKAYQQTLFVTHTVHELLWGYKDEVLSLVHIF) is important for interaction with GBA1. N-linked (GlcNAc...) asparagine glycosylation is found at asparagine 206, asparagine 224, asparagine 249, and asparagine 304. 2 disulfide bridges follow: cysteine 274–cysteine 329 and cysteine 312–cysteine 318. Residues asparagine 325, asparagine 412, and asparagine 430 are each glycosylated (N-linked (GlcNAc...) asparagine). A helical transmembrane segment spans residues 434 to 459 (IVTNIPYIIMALGVFFGLIFTWLACR). At 460–478 (GQGSTDEGTADERAPLIRT) the chain is on the cytoplasmic side.

The protein belongs to the CD36 family. As to quaternary structure, interacts with GBA1. Post-translationally, acylated by palmitic acid group(s).

It localises to the lysosome membrane. In terms of biological role, acts as a lysosomal receptor for glucosylceramidase (GBA1) targeting. This Rattus norvegicus (Rat) protein is Lysosome membrane protein 2 (Scarb2).